Consider the following 318-residue polypeptide: GTP 3',8-cyclase (318 aa).

The region spanning 5–217 (KFERKIDYIR…DKIAKKYKFK (213 aa)) is the Radical SAM core domain. Residue R14 coordinates GTP. C21 and C25 together coordinate [4Fe-4S] cluster. Residue Y27 participates in S-adenosyl-L-methionine binding. C28 contributes to the [4Fe-4S] cluster binding site. Residue R64 coordinates GTP. S-adenosyl-L-methionine is bound at residue G68. Position 95 (T95) interacts with GTP. S119 is an S-adenosyl-L-methionine binding site. K155 provides a ligand contact to GTP. Residue M189 coordinates S-adenosyl-L-methionine. C248 and C251 together coordinate [4Fe-4S] cluster. 253–255 (RIR) serves as a coordination point for GTP. C265 lines the [4Fe-4S] cluster pocket.

It belongs to the radical SAM superfamily. MoaA family. As to quaternary structure, monomer and homodimer. Requires [4Fe-4S] cluster as cofactor.

The catalysed reaction is GTP + AH2 + S-adenosyl-L-methionine = (8S)-3',8-cyclo-7,8-dihydroguanosine 5'-triphosphate + 5'-deoxyadenosine + L-methionine + A + H(+). It participates in cofactor biosynthesis; molybdopterin biosynthesis. In terms of biological role, catalyzes the cyclization of GTP to (8S)-3',8-cyclo-7,8-dihydroguanosine 5'-triphosphate. This chain is GTP 3',8-cyclase, found in Nautilia profundicola (strain ATCC BAA-1463 / DSM 18972 / AmH).